We begin with the raw amino-acid sequence, 75 residues long: Large ribosomal subunit protein bL32c (75 aa).

Positions 49–75 (SPGPTTPIKPNPKKQTGRRPRSQRRRT) are disordered. Over residues 59–75 (NPKKQTGRRPRSQRRRT) the composition is skewed to basic residues.

This sequence belongs to the bacterial ribosomal protein bL32 family.

It is found in the plastid. It localises to the chloroplast. This is Large ribosomal subunit protein bL32c from Nephroselmis olivacea (Green alga).